We begin with the raw amino-acid sequence, 69 residues long: Sec-independent protein translocase protein TatA (69 aa).

The chain crosses the membrane as a helical span at residues 1 to 21 (MGSLSIWHWLIVLAIALLLFG). Residues 41-69 (KGMNDDEETPPPAQSTTSRTVEHKADESK) are disordered. Over residues 60–69 (TVEHKADESK) the composition is skewed to basic and acidic residues.

Belongs to the TatA/E family. The Tat system comprises two distinct complexes: a TatABC complex, containing multiple copies of TatA, TatB and TatC subunits, and a separate TatA complex, containing only TatA subunits. Substrates initially bind to the TatABC complex, which probably triggers association of the separate TatA complex to form the active translocon.

It localises to the cell inner membrane. Part of the twin-arginine translocation (Tat) system that transports large folded proteins containing a characteristic twin-arginine motif in their signal peptide across membranes. TatA could form the protein-conducting channel of the Tat system. This Rhizobium rhizogenes (strain K84 / ATCC BAA-868) (Agrobacterium radiobacter) protein is Sec-independent protein translocase protein TatA.